The chain runs to 332 residues: Putative integrase/recombinase y4rC (332 aa).

Residues 5–98 form the Core-binding (CB) domain; the sequence is ASLAPLLESF…AIHSFFRYAA (94 aa). One can recognise a Tyr recombinase domain in the interval 122–307; that stretch reads TLVNFLTRPE…TLAMKEAALA (186 aa). Residues Arg162, Lys187, His259, Arg262, and His285 contribute to the active site. The O-(3'-phospho-DNA)-tyrosine intermediate role is filled by Tyr294.

This sequence belongs to the 'phage' integrase family.

The sequence is that of Putative integrase/recombinase y4rC from Sinorhizobium fredii (strain NBRC 101917 / NGR234).